Reading from the N-terminus, the 185-residue chain is Ribosome-recycling factor (185 aa).

Residues 138–157 (ELKKLEKDHTASEDEVKRAQ) are disordered.

Belongs to the RRF family.

Its subcellular location is the cytoplasm. Responsible for the release of ribosomes from messenger RNA at the termination of protein biosynthesis. May increase the efficiency of translation by recycling ribosomes from one round of translation to another. The sequence is that of Ribosome-recycling factor from Desulfitobacterium hafniense (strain DSM 10664 / DCB-2).